Consider the following 282-residue polypeptide: MGIEVGKRRLVYTTSRNNDRNLDFLKRRRIEDSSSSSDHEDNQRGSLSSSSSSEEDSDRDDSHVSLRQSVDDRDLEITKKREEILDTSEIKPIERQKKSYDDEQGDVDQICKWFMDRYKFPKILYASELLEKATPLLPIVRDMYRGLVDSHYKFEANEMRQSSQRAILSVQEFRNMDLTKFTAGYYGMKRQFQIGEVILQKYKSFLLRRQGDTMKWWGVSDFAHYVLAPEVLVSLCIKEMQLSDDVYDKNARERAYDIFVNTVKFGTLVADQSPLEPWEVTP.

Composition is skewed to basic and acidic residues over residues 22-43 (LDFLKRRRIEDSSSSSDHEDNQ) and 60-70 (DDSHVSLRQSV). A disordered region spans residues 22–70 (LDFLKRRRIEDSSSSSDHEDNQRGSLSSSSSSEEDSDRDDSHVSLRQSV).

This sequence belongs to the RTC4 family.

It localises to the cytoplasm. The protein localises to the nucleus. Its function is as follows. May be involved in a process influencing telomere capping. The sequence is that of Restriction of telomere capping protein 4 (RTC4) from Zygosaccharomyces rouxii (strain ATCC 2623 / CBS 732 / NBRC 1130 / NCYC 568 / NRRL Y-229).